The chain runs to 150 residues: Lipoprotein signal peptidase (150 aa).

Transmembrane regions (helical) follow at residues 5–25 (LSLVIIVVGIVADQIFKNWIV), 59–79 (QQWFFLILTPIVLVVALWFLW), and 83–103 (AQNWYFIGLTLIIAGALGNFI). Residues D113 and D129 contribute to the active site. Residues 124–144 (IFNIADILLSVGFVLLFIAIL) traverse the membrane as a helical segment.

This sequence belongs to the peptidase A8 family.

The protein resides in the cell membrane. It catalyses the reaction Release of signal peptides from bacterial membrane prolipoproteins. Hydrolyzes -Xaa-Yaa-Zaa-|-(S,diacylglyceryl)Cys-, in which Xaa is hydrophobic (preferably Leu), and Yaa (Ala or Ser) and Zaa (Gly or Ala) have small, neutral side chains.. Its pathway is protein modification; lipoprotein biosynthesis (signal peptide cleavage). In terms of biological role, this protein specifically catalyzes the removal of signal peptides from prolipoproteins. This is Lipoprotein signal peptidase from Lactococcus lactis subsp. lactis (strain IL1403) (Streptococcus lactis).